A 205-amino-acid polypeptide reads, in one-letter code: Large ribosomal subunit protein bL25 (205 aa).

Positions 178 to 205 (FPETEPVEDEESAGEDAQGESEEKAAKE) are disordered. The segment covering 182–197 (EPVEDEESAGEDAQGE) has biased composition (acidic residues).

Belongs to the bacterial ribosomal protein bL25 family. CTC subfamily. As to quaternary structure, part of the 50S ribosomal subunit; part of the 5S rRNA/L5/L18/L25 subcomplex. Contacts the 5S rRNA. Binds to the 5S rRNA independently of L5 and L18.

Functionally, this is one of the proteins that binds to the 5S RNA in the ribosome where it forms part of the central protuberance. The chain is Large ribosomal subunit protein bL25 from Cutibacterium acnes (strain DSM 16379 / KPA171202) (Propionibacterium acnes).